A 494-amino-acid polypeptide reads, in one-letter code: MAPRCWRWWSWSAWPGVRPLPSRSTPTPGFCKKFSTQETTPQICVVGSGPAGFYTAQHLLKHHTRAHVDIYEKQLVPFGLVRFGVAPDHPEVKNVINTFTQTARSDRCAFRGNVVVGRDVSVPELREAYHAVVLSYGAEDHQPLEIPGEELPGVVSARAFVGWYNGLPENQKLAPDLSCDTAVILGQGNVALDVARILLTPPEHLEKTDITEVALGVLRQSRVKTVWIVGRRGPLQVAFTIKELREMIQLPGTQPILDPSDFLGLQDRIKDVPRPRKRLTELLLRTATEKPGVEEAARRALASRAWGLRFFRSPQQVLPTPDGRRVAGIRLAVTRLEGVGESTRAVPTGDVEDLPCGLLLSSVGYKSRPIDPSVPFDPKLGIIPNTEGRVVNAPGLYCSGWVKRGPTGVITTTMTDSFLTSQVLLKDLKAGLLPSGPRPGYTAIQALLSDRGVRPVSFSDWEKLDAEEVARGQGTGKPREKLVDRREMLQLLGH.

Residues 1–34 constitute a mitochondrion transit peptide; the sequence is MAPRCWRWWSWSAWPGVRPLPSRSTPTPGFCKKF. Alanine 51, glutamate 72, leucine 80, and valine 116 together coordinate FAD. Residues 187 to 190, 231 to 232, and glutamate 243 each bind NADP(+); these read QGNV and RR. Serine 313 carries the phosphoserine modification. FAD is bound by residues tryptophan 401 and 408–410; that span reads GVI. Residue glycine 408 participates in NADP(+) binding.

The protein belongs to the ferredoxin--NADP reductase type 1 family. As to quaternary structure, monomer. Interacts directly with FDX1. FAD is required as a cofactor.

The protein localises to the mitochondrion inner membrane. It catalyses the reaction 2 reduced [adrenodoxin] + NADP(+) + H(+) = 2 oxidized [adrenodoxin] + NADPH. The catalysed reaction is 2 reduced [2Fe-2S]-[ferredoxin] + NADP(+) + H(+) = 2 oxidized [2Fe-2S]-[ferredoxin] + NADPH. It functions in the pathway steroid metabolism; cholesterol metabolism. Its function is as follows. Serves as the first electron transfer protein in all the mitochondrial P450 systems including cholesterol side chain cleavage in all steroidogenic tissues, steroid 11-beta hydroxylation in the adrenal cortex, 25-OH-vitamin D3-24 hydroxylation in the kidney, and sterol C-27 hydroxylation in the liver. Also acts as a ferredoxin--NADP(+) reductase essential for coenzyme Q biosynthesis: together with FDX2, transfers the electrons required for the hydroxylation reaction performed by COQ6. The protein is NADPH:adrenodoxin oxidoreductase, mitochondrial (Fdxr) of Rattus norvegicus (Rat).